Reading from the N-terminus, the 250-residue chain is Coproheme decarboxylase (250 aa).

Fe-coproporphyrin III contacts are provided by residues arginine 131, 145-149, histidine 172, and glutamine 185; that span reads YPMNK. The active site involves tyrosine 145.

Belongs to the ChdC family. Type 1 subfamily. Requires Fe-coproporphyrin III as cofactor.

It carries out the reaction Fe-coproporphyrin III + 2 H2O2 + 2 H(+) = heme b + 2 CO2 + 4 H2O. The catalysed reaction is Fe-coproporphyrin III + H2O2 + H(+) = harderoheme III + CO2 + 2 H2O. The enzyme catalyses harderoheme III + H2O2 + H(+) = heme b + CO2 + 2 H2O. Its pathway is porphyrin-containing compound metabolism; protoheme biosynthesis. Involved in coproporphyrin-dependent heme b biosynthesis. Catalyzes the decarboxylation of Fe-coproporphyrin III (coproheme) to heme b (protoheme IX), the last step of the pathway. The reaction occurs in a stepwise manner with a three-propionate intermediate. This chain is Coproheme decarboxylase, found in Staphylococcus aureus (strain bovine RF122 / ET3-1).